The primary structure comprises 337 residues: MTKSNFVDYAKIHIRSGKGGKGSIHFRHEKYIPWGGSDGGNGGKGGDIILRGSRNYWTLLHLKHKYHIFADHGKAGEGKLRHGKDGQNKTIELPIGTAVFDGTTGKFITDIKYDKQEIVLLKGGRGGRGNNYFKSAVNQTPKHSQPGEPYEERQIVFQLKLLADVGLVGFPNTGKSTLLSIVSAAKPKIADYAFTTLEPNLGVVNVHNSYTFVMADIPGIVEGANEGKGLGLRFLRHIERNSLLLFMIPSDANDIANEYKILLNELACYNSELLNKQRILAISKSDMLDTKLEDVIKKELPTDIPHIFISSFTQKGITVLKDLLWEKLRFHDMKEIS.

The 159-residue stretch at 4–162 (SNFVDYAKIH…RQIVFQLKLL (159 aa)) folds into the Obg domain. The OBG-type G domain maps to 163-329 (ADVGLVGFPN…LKDLLWEKLR (167 aa)). GTP-binding positions include 169–176 (GFPNTGKS), 194–198 (FTTLE), 216–219 (DIPG), 283–286 (SKSD), and 310–312 (SSF). The Mg(2+) site is built by S176 and T196.

It belongs to the TRAFAC class OBG-HflX-like GTPase superfamily. OBG GTPase family. Monomer. It depends on Mg(2+) as a cofactor.

It is found in the cytoplasm. An essential GTPase which binds GTP, GDP and possibly (p)ppGpp with moderate affinity, with high nucleotide exchange rates and a fairly low GTP hydrolysis rate. Plays a role in control of the cell cycle, stress response, ribosome biogenesis and in those bacteria that undergo differentiation, in morphogenesis control. The protein is GTPase Obg of Azobacteroides pseudotrichonymphae genomovar. CFP2.